The primary structure comprises 703 residues: Collagen alpha-2(VIII) chain (703 aa).

Residues 1 to 28 form the signal peptide; it reads MLGTLTPLSSLLLLLLVLVLGCGPRASS. Residues 29–76 are nonhelical region (NC2); it reads GGGAGGAAGYAPVKYIQPMQKGPVGPPFREGKGQYLEMPLPLLPMDLK. A disordered region spans residues 70 to 544; that stretch reads LLPMDLKGEP…AFDETGIAGL (475 aa). Residues 77–536 are triple-helical region; the sequence is GEPGPPGKPG…PGPPGAPGAF (460 aa). Residues 79 to 97 are compositionally biased toward pro residues; sequence PGPPGKPGPRGPPGPPGFP. Over residues 166–192 the composition is skewed to low complexity; the sequence is PSGITIPGKPGAQGVPGPPGFQGEPGP. Residues 206–224 show a composition bias toward gly residues; sequence GDNGVGQPGLPGAPGQGGA. Composition is skewed to low complexity over residues 265–275 and 285–297; these read EPGAVGPKGPP and AAGLPGPQGPSGA. Gly residues predominate over residues 433–442; the sequence is GRPGGPGVAG. Composition is skewed to low complexity over residues 444–462 and 476–486; these read LGQKGDLGLPGQPGLRGPS and PQGLPGLKGEP. The span at 506–532 shows a compositional bias: pro residues; the sequence is TGPPGVPGSPGITGPPGPPGPPGPPGA. The interval 537 to 703 is nonhelical region (NC1); the sequence is DETGIAGLHL…SFSGFLLCPT (167 aa). The region spanning 570–703 is the C1q domain; that stretch reads SAHATPAFTA…SFSGFLLCPT (134 aa).

As to quaternary structure, homotrimers, or heterotrimers in association with alpha 2(VIII) type collagens. Four homotrimers can form a tetrahedron stabilized by central interacting C-terminal NC1 trimers. In terms of processing, proteolytically cleaved by neutrophil elastase, in vitro. Prolines at the third position of the tripeptide repeating unit (G-X-Y) are hydroxylated in some or all of the chains. Expressed primarily in the subendothelium of large blood vessels. Also expressed in arterioles and venules in muscle, heart, kidney, spleen, umbilical cord, liver and lung and is also found in connective tissue layers around hair follicles, around nerve bundles in muscle, in the dura of the optic nerve, in cornea and sclera, and in the perichondrium of cartilaginous tissues. In the kidney, expressed in mesangial cells, glomerular endothelial cells, and tubular epithelial cells. Also expressed in mast cells, and in astrocytes during the repair process. Expressed in Descemet's membrane.

It localises to the secreted. The protein localises to the extracellular space. It is found in the extracellular matrix. Its subcellular location is the basement membrane. Its function is as follows. Macromolecular component of the subendothelium. Major component of the Descemet's membrane (basement membrane) of corneal endothelial cells. Also a component of the endothelia of blood vessels. Necessary for migration and proliferation of vascular smooth muscle cells and thus, has a potential role in the maintenance of vessel wall integrity and structure, in particular in atherogenesis. This chain is Collagen alpha-2(VIII) chain (COL8A2), found in Homo sapiens (Human).